We begin with the raw amino-acid sequence, 1189 residues long: MEENNQNQCIPYNCLSNPEEVLLDGERISTGNSSIDISLSLVQFLVSNFVPGGGFLVGLIDFVWGIVGPSQWDAFLVQIEQLINERIAEFARNAAIANLEGLGNNFNIYVEAFKEWEEDPNNPATRTRVIDRFRILDGLLERDIPSFRISGFEVPLLSVYAQAANLHLAILRDSVIFGERWGLTTINVNENYNRLIRHIDEYADHCANTYNRGLNNLPKSTYQDWITYNRLRRDLTLTVLDIAAFFPNYDNRRYPIQPVGQLTREVYTDPLINFNPQLQSVAQLPTFNVMESSAIRNPHLFDILNNLTIFTDWFSVGRNFYWGGHRVISSLIGGGNITSPIYGREANQEPPRSFTFNGPVFRTLSNPTLRLLQQPWPAPPFNLRGVEGVEFSTPTNSFTYRGRGTVDSLTELPPEDNSVPPREGYSHRLCHATFVQRSGTPFLTTGVVFSWTHRSATLTNTIDPERINQIPLVKGFRVWGGTSVITGPGFTGGDILRRNTFGDFVSLQVNINSPITQRYRLRFRYASSRDARVIVLTGAASTGVGGQVSVNMPLQKTMEIGENLTSRTFRYTDFSNPFSFRANPDIIGISEQPLFGAGSISSGELYIDKIEIILADATFEAESDLERAQKAVNALFTSSNQIGLKTDVTDYHIDQVSNLVDCLSDEFCLDEKRELSEKVKHAKRLSDERNLLQDPNFRGINRQPDRGWRGSTDITIQGGDDVFKENYVTLPGTVDECYPTYLYQKIDESKLKAYTRYELRGYIEDSQDLEIYLIRYNAKHEIVNVPGTGSLWPLSAQSPIGKCGEPNRCAPHLEWNPDLDCSCRDGEKCAHHSHHFTLDIDVGCTDLNEDLGLWVIFKIKTQDNHARLGNLEFLEEKPLLGEALARVKRAEKKWRDKREKLQLETNIVYKEAKESVDALFVNSQYDRLQVNTNIAMIHAADKRVHRIREAYLPELSVIPGVNAAIFEELEGRIFTAYSLYDARNVIKNGDFNNGLLCWNVKGHVDVEEQNNHRSVLVIPEWEAEVSQEVRVCPGRGYILRVTAYKEGYGEGCVTIHEIEDNTDELKFSNCVEEEVYPNNTVTCNNYTGTQEEYEGTYTSRNQGYDEAYGNNPSVPADYASVYEEKSYTDGRRENPCESNRGYGDYTPLPAGYVTKDLEYFPETDKVWIEIGETEGTFIVDSVELLLMEE.

The protein belongs to the delta endotoxin family.

Promotes colloidosmotic lysis by binding to the midgut epithelial cells of many lepidopteran larvae including Spodoptera species. The protein is Pesticidal crystal protein Cry1Ca (cry1Ca) of Bacillus thuringiensis subsp. aizawai.